The chain runs to 139 residues: Endoribonuclease YbeY (139 aa).

His99, His103, and His109 together coordinate Zn(2+).

The protein belongs to the endoribonuclease YbeY family. It depends on Zn(2+) as a cofactor.

The protein resides in the cytoplasm. Functionally, single strand-specific metallo-endoribonuclease involved in late-stage 70S ribosome quality control and in maturation of the 3' terminus of the 16S rRNA. The sequence is that of Endoribonuclease YbeY from Sulfurimonas denitrificans (strain ATCC 33889 / DSM 1251) (Thiomicrospira denitrificans (strain ATCC 33889 / DSM 1251)).